A 348-amino-acid polypeptide reads, in one-letter code: GMP reductase (348 aa).

108 to 131 (ADFIKLRQILALSPSLKFICIDVA) contributes to the NADP(+) binding site. K(+) is bound by residues Gly181 and Gly183. Cys186 serves as the catalytic Thioimidate intermediate. 216 to 239 (IVSDGGCTMPGDVAKAFGGGADFV) provides a ligand contact to NADP(+).

It belongs to the IMPDH/GMPR family. GuaC type 1 subfamily. In terms of assembly, homotetramer.

It carries out the reaction IMP + NH4(+) + NADP(+) = GMP + NADPH + 2 H(+). In terms of biological role, catalyzes the irreversible NADPH-dependent deamination of GMP to IMP. It functions in the conversion of nucleobase, nucleoside and nucleotide derivatives of G to A nucleotides, and in maintaining the intracellular balance of A and G nucleotides. The protein is GMP reductase of Edwardsiella ictaluri (strain 93-146).